A 276-amino-acid chain; its full sequence is Dermonecrotic toxin LlSicTox-alphaIV2iv (276 aa).

Histidine 5 is an active-site residue. Mg(2+)-binding residues include glutamate 25 and aspartate 27. The active-site Nucleophile is histidine 41. 2 disulfide bridges follow: cysteine 45–cysteine 51 and cysteine 47–cysteine 193. Aspartate 85 is a binding site for Mg(2+).

The protein belongs to the arthropod phospholipase D family. Class II subfamily. The cofactor is Mg(2+). Expressed by the venom gland.

The protein resides in the secreted. The enzyme catalyses an N-(acyl)-sphingosylphosphocholine = an N-(acyl)-sphingosyl-1,3-cyclic phosphate + choline. It carries out the reaction an N-(acyl)-sphingosylphosphoethanolamine = an N-(acyl)-sphingosyl-1,3-cyclic phosphate + ethanolamine. It catalyses the reaction a 1-acyl-sn-glycero-3-phosphocholine = a 1-acyl-sn-glycero-2,3-cyclic phosphate + choline. The catalysed reaction is a 1-acyl-sn-glycero-3-phosphoethanolamine = a 1-acyl-sn-glycero-2,3-cyclic phosphate + ethanolamine. Its function is as follows. Dermonecrotic toxins cleave the phosphodiester linkage between the phosphate and headgroup of certain phospholipids (sphingolipid and lysolipid substrates), forming an alcohol (often choline) and a cyclic phosphate. This toxin acts on sphingomyelin (SM). It may also act on ceramide phosphoethanolamine (CPE), lysophosphatidylcholine (LPC) and lysophosphatidylethanolamine (LPE), but not on lysophosphatidylserine (LPS), and lysophosphatidylglycerol (LPG). It acts by transphosphatidylation, releasing exclusively cyclic phosphate products as second products. Induces dermonecrosis, hemolysis, increased vascular permeability, edema, inflammatory response, and platelet aggregation. This Loxosceles laeta (South American recluse spider) protein is Dermonecrotic toxin LlSicTox-alphaIV2iv.